A 479-amino-acid polypeptide reads, in one-letter code: Glycogen synthase (479 aa).

Residue Lys15 participates in ADP-alpha-D-glucose binding.

It belongs to the glycosyltransferase 1 family. Bacterial/plant glycogen synthase subfamily.

It carries out the reaction [(1-&gt;4)-alpha-D-glucosyl](n) + ADP-alpha-D-glucose = [(1-&gt;4)-alpha-D-glucosyl](n+1) + ADP + H(+). Its pathway is glycan biosynthesis; glycogen biosynthesis. Synthesizes alpha-1,4-glucan chains using ADP-glucose. This is Glycogen synthase from Acidiphilium cryptum (strain JF-5).